Consider the following 613-residue polypeptide: Laccase 1 (613 aa).

An N-terminal signal peptide occupies residues 1–20; sequence MSRFARLLLIVALFFTNAWA. Plastocyanin-like domains lie at 29–142 and 171–359; these read ITWK…IRPK and YLVV…MRIP. A glycan (N-linked (GlcNAc...) asparagine) is linked at Asn74. Residues His78, His80, His122, and His124 each contribute to the Cu cation site. 5 N-linked (GlcNAc...) asparagine glycosylation sites follow: Asn256, Asn279, Asn444, Asn468, and Asn484. The Plastocyanin-like 3 domain occupies 468–598; that stretch reads NATRDTENDG…GGMGIAILDG (131 aa). Residues His506, His509, and His511 each contribute to the Cu cation site. Asn526 carries an N-linked (GlcNAc...) asparagine glycan. Residues His580, Cys581, His582, and His586 each contribute to the Cu cation site.

Belongs to the multicopper oxidase family. Cu cation serves as cofactor.

The protein resides in the cell surface. It functions in the pathway pigment biosynthesis. Functionally, laccase; part of the Pks1 gene cluster that mediates the biosynthesis of an anthraquinone derivative pigment that contributes to conidial pigmentation that provides protection from UV radiation, heat and cold stress. The polyketide synthase Pks1 produces 1-acetyl-2,4,6,8-tetrahydroxy-9,10-anthraquinone though condensation of acetyl-CoA with malonyl-CoA. The dehydratase EthD and the laccase Mlac1 further convert the anthraquinone derivative into the final conidial pigment. In Metarhizium robertsii (strain ARSEF 23 / ATCC MYA-3075) (Metarhizium anisopliae (strain ARSEF 23)), this protein is Laccase 1.